Reading from the N-terminus, the 228-residue chain is Protein GlxC (228 aa).

The protein belongs to the FwdC/FmdC family.

This chain is Protein GlxC (glxC), found in Rhizobium meliloti (strain 1021) (Ensifer meliloti).